The primary structure comprises 399 residues: Keratin, type I cytoskeletal 19 (399 aa).

The tract at residues 1–78 (MTSYSYRQSS…ATSDGLLAGN (78 aa)) is head. Position 7 is an omega-N-methylarginine (Arg-7). Phosphoserine is present on residues Ser-14 and Ser-22. Residue Arg-24 is modified to Asymmetric dimethylarginine; alternate. Arg-24 is modified (omega-N-methylarginine; alternate). Arg-32 bears the Omega-N-methylarginine mark. A phosphoserine mark is found at Ser-35 and Ser-40. Omega-N-methylarginine is present on residues Arg-43 and Arg-51. 2 positions are modified to phosphoserine: Ser-57 and Ser-71. Residues 79-114 (EKLTMQNLNDRLASYLEKVRALEEANGDLEVKIRDW) are coil 1A. In terms of domain architecture, IF rod spans 79–390 (EKLTMQNLND…NLLEGQDAYF (312 aa)). The interval 115 to 132 (YQKQGPGPARDYSHYFKT) is linker 1. A coil 1B region spans residues 133 to 224 (IEDLRDQILG…KNHEEEMSVL (92 aa)). The linker 12 stretch occupies residues 225–247 (KGQVGGQVSVEVDSAPGIDLAKI). Residues 243–389 (DLAKILSDMR…RNLLEGQDAY (147 aa)) are necessary for interaction with PNN. Residues 248 to 386 (LSDMRSQYEV…ATYRNLLEGQ (139 aa)) are coil 2. Thr-322 bears the Phosphothreonine mark. Positions 387-399 (DAYFNDLSLAKAL) are rod-like helical tail. Residue Ser-394 is modified to Phosphoserine.

Belongs to the intermediate filament family. In terms of assembly, heterotetramer of two type I and two type II keratins. Interacts with PNN and the actin-binding domain of DMD.

In terms of biological role, involved in the organization of myofibers. Together with KRT8, helps to link the contractile apparatus to dystrophin at the costameres of striated muscle. The sequence is that of Keratin, type I cytoskeletal 19 (KRT19) from Bos taurus (Bovine).